Consider the following 254-residue polypeptide: Ubiquinone/menaquinone biosynthesis C-methyltransferase UbiE (254 aa).

Residues Thr-77, Asp-98, 126 to 127 (DA), and Ser-143 each bind S-adenosyl-L-methionine.

The protein belongs to the class I-like SAM-binding methyltransferase superfamily. MenG/UbiE family.

The enzyme catalyses a 2-demethylmenaquinol + S-adenosyl-L-methionine = a menaquinol + S-adenosyl-L-homocysteine + H(+). The catalysed reaction is a 2-methoxy-6-(all-trans-polyprenyl)benzene-1,4-diol + S-adenosyl-L-methionine = a 5-methoxy-2-methyl-3-(all-trans-polyprenyl)benzene-1,4-diol + S-adenosyl-L-homocysteine + H(+). It functions in the pathway quinol/quinone metabolism; menaquinone biosynthesis; menaquinol from 1,4-dihydroxy-2-naphthoate: step 2/2. Its pathway is cofactor biosynthesis; ubiquinone biosynthesis. Methyltransferase required for the conversion of demethylmenaquinol (DMKH2) to menaquinol (MKH2) and the conversion of 2-polyprenyl-6-methoxy-1,4-benzoquinol (DDMQH2) to 2-polyprenyl-3-methyl-6-methoxy-1,4-benzoquinol (DMQH2). This is Ubiquinone/menaquinone biosynthesis C-methyltransferase UbiE from Blochmanniella pennsylvanica (strain BPEN).